Consider the following 329-residue polypeptide: RNA-binding protein CP33, chloroplastic (329 aa).

A chloroplast-targeting transit peptide spans 1 to 69 (MSSAYCSSAV…NIRRHRFFCA (69 aa)). Residues 77-104 (ADDEIQASVEEEEEVEEEGDEGEEEVEE) are compositionally biased toward acidic residues. Disordered stretches follow at residues 77-117 (ADDE…EEGR) and 296-329 (SERE…NVSA). 2 consecutive RRM domains span residues 116 to 194 (GRLY…FPEV) and 219 to 297 (HKVY…LASE).

It is found in the plastid. It localises to the chloroplast. In terms of biological role, could be involved in splicing and/or processing of chloroplast RNAs. The chain is RNA-binding protein CP33, chloroplastic from Arabidopsis thaliana (Mouse-ear cress).